The primary structure comprises 98 residues: uncharacterized protein (98 aa).

2 consecutive transmembrane segments (helical) span residues Leu-8–Leu-28 and Leu-73–Leu-93.

It localises to the membrane. This is an uncharacterized protein from Saccharomyces cerevisiae (strain ATCC 204508 / S288c) (Baker's yeast).